Consider the following 387-residue polypeptide: 3-hydroxy-D-aspartate aldolase (387 aa).

Lys62 carries the N6-(pyridoxal phosphate)lysine modification. Residues Gln85, Thr238, 256-257 (GS), and Tyr265 contribute to the pyridoxal 5'-phosphate site. Mg(2+)-binding residues include His355 and Asp357.

Belongs to the DSD1 family. Homodimer. Pyridoxal 5'-phosphate serves as cofactor. Mg(2+) is required as a cofactor.

It catalyses the reaction (3S)-3-hydroxy-D-aspartate = glyoxylate + glycine. The catalysed reaction is (3R)-3-hydroxy-D-aspartate = glyoxylate + glycine. Catalyzes the condensation of glyoxylate and glycine into (2R,3S)-beta-hydroxyaspartate ((3S)-3-hydroxy-D-aspartate). Is essential for the growth of P.denitrificans in the presence of glycolate and glyoxylate since it functions in glyoxylate assimilation via the beta-hydroxyaspartate cycle (BHAC). Is also able to catalyze the reverse reaction in vitro, i.e. the cleavage of (3S)-3-hydroxy-D-aspartate, and that of D-threonine to a lesser extent. This chain is 3-hydroxy-D-aspartate aldolase, found in Paracoccus denitrificans (strain Pd 1222).